Consider the following 147-residue polypeptide: Hemoglobin subunit epsilon (147 aa).

The 145-residue stretch at 3–147 folds into the Globin domain; the sequence is HFTAEEKATV…VANALAHKYH (145 aa). 2 positions are modified to phosphoserine: serine 14 and serine 51. Residues histidine 64 and histidine 93 each contribute to the heme b site.

Belongs to the globin family. As to quaternary structure, heterotetramer of two alpha chains and two epsilon chains in early embryonic hemoglobin Gower-2; two zeta chains and two epsilon chains in early embryonic hemoglobin Gower-1. Red blood cells.

Its function is as follows. The epsilon chain is a beta-type chain of early mammalian embryonic hemoglobin. The protein is Hemoglobin subunit epsilon (HBE1) of Bradypus tridactylus (Pale-throated three-toed sloth).